Reading from the N-terminus, the 508-residue chain is GMP synthase [glutamine-hydrolyzing] (508 aa).

The Glutamine amidotransferase type-1 domain occupies 1-189; sequence MILVLDFGSQ…ALLVCGCEKT (189 aa). Cysteine 78 (nucleophile) is an active-site residue. Residues histidine 163 and glutamate 165 contribute to the active site. The 194-residue stretch at 190-383 folds into the GMPS ATP-PPase domain; sequence WGMQHFAQRE…LGVSQDFLMR (194 aa). 217–223 is an ATP binding site; it reads SGGVDST.

Homodimer.

It carries out the reaction XMP + L-glutamine + ATP + H2O = GMP + L-glutamate + AMP + diphosphate + 2 H(+). Its pathway is purine metabolism; GMP biosynthesis; GMP from XMP (L-Gln route): step 1/1. Catalyzes the synthesis of GMP from XMP. The chain is GMP synthase [glutamine-hydrolyzing] (guaA) from Helicobacter pylori (strain ATCC 700392 / 26695) (Campylobacter pylori).